Consider the following 131-residue polypeptide: Small ribosomal subunit protein uS8 (131 aa).

It belongs to the universal ribosomal protein uS8 family. In terms of assembly, part of the 30S ribosomal subunit. Contacts proteins S5 and S12.

Functionally, one of the primary rRNA binding proteins, it binds directly to 16S rRNA central domain where it helps coordinate assembly of the platform of the 30S subunit. The polypeptide is Small ribosomal subunit protein uS8 (Cupriavidus metallidurans (strain ATCC 43123 / DSM 2839 / NBRC 102507 / CH34) (Ralstonia metallidurans)).